Here is a 548-residue protein sequence, read N- to C-terminus: Inosine-5'-monophosphate dehydrogenase (548 aa).

CBS domains are found at residues 121–201 (FILD…EDPV) and 205–261 (MSTE…PLAS). NAD(+)-binding positions include 298-300 (DSS) and 348-350 (GMG). K(+)-binding residues include G350 and G352. S353 lines the IMP pocket. Residue C355 coordinates K(+). C355 serves as the catalytic Thioimidate intermediate. IMP contacts are provided by residues 388–390 (DGG) and 411–412 (GS). R461 (proton acceptor) is an active-site residue. Position 473 (Q473) interacts with IMP. A disordered region spans residues 527 to 548 (ASAQTEGNVHGLHSHEKKLYSS). S528 serves as a coordination point for K(+). A compositionally biased stretch (basic and acidic residues) spans 539–548 (HSHEKKLYSS).

It belongs to the IMPDH/GMPR family. In terms of assembly, homotetramer. The cofactor is K(+).

Its subcellular location is the cytoplasm. It catalyses the reaction IMP + NAD(+) + H2O = XMP + NADH + H(+). It functions in the pathway purine metabolism; XMP biosynthesis via de novo pathway; XMP from IMP: step 1/1. Mycophenolic acid (MPA) is a non-competitive inhibitor that prevents formation of the closed enzyme conformation by binding to the same site as the amobile flap. In contrast, mizoribine monophosphate (MZP) is a competitive inhibitor that induces the closed conformation. MPA is a potent inhibitor of mammalian IMPDHs but a poor inhibitor of the bacterial enzymes. MZP is a more potent inhibitor of bacterial IMPDH. Catalyzes the conversion of inosine 5'-phosphate (IMP) to xanthosine 5'-phosphate (XMP), the first committed and rate-limiting step in the de novo synthesis of guanine nucleotides, and therefore plays an important role in the regulation of cell growth. Part of the gene cluster that mediates the biosynthesis of mycophenolic acid (MPA), the first isolated antibiotic natural product in the world. Does not play a role in the biosynthesis of MPA, but is involved in self resistance to MPA, since MPA acts as an inhibitor of IMP dehydrogenases. The protein is Inosine-5'-monophosphate dehydrogenase of Penicillium brevicompactum.